An 89-amino-acid chain; its full sequence is Small ribosomal subunit protein uS15 (89 aa).

Basic and acidic residues predominate over residues 1 to 21 (MALSPEKKNEIIENFKTHEGD). The interval 1–23 (MALSPEKKNEIIENFKTHEGDTG) is disordered.

This sequence belongs to the universal ribosomal protein uS15 family. As to quaternary structure, part of the 30S ribosomal subunit. Forms a bridge to the 50S subunit in the 70S ribosome, contacting the 23S rRNA.

In terms of biological role, one of the primary rRNA binding proteins, it binds directly to 16S rRNA where it helps nucleate assembly of the platform of the 30S subunit by binding and bridging several RNA helices of the 16S rRNA. Forms an intersubunit bridge (bridge B4) with the 23S rRNA of the 50S subunit in the ribosome. This Desulforamulus reducens (strain ATCC BAA-1160 / DSM 100696 / MI-1) (Desulfotomaculum reducens) protein is Small ribosomal subunit protein uS15.